A 264-amino-acid polypeptide reads, in one-letter code: Thiazole synthase (264 aa).

The active-site Schiff-base intermediate with DXP is the K106. 1-deoxy-D-xylulose 5-phosphate contacts are provided by residues G167, 193-194 (AG), and 215-216 (NS).

Belongs to the ThiG family. As to quaternary structure, homotetramer. Forms heterodimers with either ThiH or ThiS.

It is found in the cytoplasm. The enzyme catalyses [ThiS sulfur-carrier protein]-C-terminal-Gly-aminoethanethioate + 2-iminoacetate + 1-deoxy-D-xylulose 5-phosphate = [ThiS sulfur-carrier protein]-C-terminal Gly-Gly + 2-[(2R,5Z)-2-carboxy-4-methylthiazol-5(2H)-ylidene]ethyl phosphate + 2 H2O + H(+). The protein operates within cofactor biosynthesis; thiamine diphosphate biosynthesis. Its function is as follows. Catalyzes the rearrangement of 1-deoxy-D-xylulose 5-phosphate (DXP) to produce the thiazole phosphate moiety of thiamine. Sulfur is provided by the thiocarboxylate moiety of the carrier protein ThiS. In vitro, sulfur can be provided by H(2)S. This chain is Thiazole synthase, found in Prochlorococcus marinus (strain MIT 9301).